Consider the following 396-residue polypeptide: Argininosuccinate synthase (396 aa).

Position 6–14 (6–14) interacts with ATP; it reads AYSGGLDTS. Y83 is a binding site for L-citrulline. G113 lines the ATP pocket. The L-aspartate site is built by T115, N119, and D120. Position 119 (N119) interacts with L-citrulline. L-citrulline is bound by residues R123, S171, S180, E256, and Y268.

Belongs to the argininosuccinate synthase family. Type 1 subfamily. In terms of assembly, homotetramer.

The protein localises to the cytoplasm. The enzyme catalyses L-citrulline + L-aspartate + ATP = 2-(N(omega)-L-arginino)succinate + AMP + diphosphate + H(+). It participates in amino-acid biosynthesis; L-arginine biosynthesis; L-arginine from L-ornithine and carbamoyl phosphate: step 2/3. In Hyperthermus butylicus (strain DSM 5456 / JCM 9403 / PLM1-5), this protein is Argininosuccinate synthase.